Reading from the N-terminus, the 311-residue chain is Malate dehydrogenase (311 aa).

NAD(+)-binding positions include 7–13 (GAAGGIG) and D34. Substrate contacts are provided by R81 and R87. Residues N94 and 117–119 (ITN) contribute to the NAD(+) site. Substrate is bound by residues N119 and R153. Residue H177 is the Proton acceptor of the active site. Residue M227 coordinates NAD(+).

This sequence belongs to the LDH/MDH superfamily. MDH type 1 family. In terms of assembly, homodimer.

It carries out the reaction (S)-malate + NAD(+) = oxaloacetate + NADH + H(+). Functionally, catalyzes the reversible oxidation of malate to oxaloacetate. The protein is Malate dehydrogenase of Aeromonas hydrophila subsp. hydrophila (strain ATCC 7966 / DSM 30187 / BCRC 13018 / CCUG 14551 / JCM 1027 / KCTC 2358 / NCIMB 9240 / NCTC 8049).